Here is a 471-residue protein sequence, read N- to C-terminus: ATP synthase subunit beta (471 aa).

An ATP-binding site is contributed by Gly-153–Thr-160.

The protein belongs to the ATPase alpha/beta chains family. F-type ATPases have 2 components, CF(1) - the catalytic core - and CF(0) - the membrane proton channel. CF(1) has five subunits: alpha(3), beta(3), gamma(1), delta(1), epsilon(1). CF(0) has four main subunits: a(1), b(1), b'(1) and c(9-12).

Its subcellular location is the cell membrane. It carries out the reaction ATP + H2O + 4 H(+)(in) = ADP + phosphate + 5 H(+)(out). In terms of biological role, produces ATP from ADP in the presence of a proton gradient across the membrane. The catalytic sites are hosted primarily by the beta subunits. The sequence is that of ATP synthase subunit beta from Roseiflexus castenholzii (strain DSM 13941 / HLO8).